A 760-amino-acid chain; its full sequence is Catecholate siderophore receptor Fiu (760 aa).

A signal peptide spans 1-31 (MENNRNFPARQFHSLTFFAGLCIGITPVAQA). Positions 67–175 (PVADTTRTMT…PTGSINMISK (109 aa)) constitute a TBDR plug domain. The region spanning 180 to 760 (DSGIDASASI…TFLLTANMHF (581 aa)) is the TBDR beta-barrel domain. Positions 743–760 (RYHPGEPRTFLLTANMHF) match the TonB C-terminal box motif.

It belongs to the TonB-dependent receptor family.

The protein localises to the cell outer membrane. Involved in the active transport across the outer membrane of iron complexed with catecholate siderophores such as dihydroxybenzoylserine and dihydroxybenzoate. It derives its energy for transport by interacting with the trans-periplasmic membrane protein TonB. Can also transport catechol-substituted cephalosporins. Receptor for microcins M, H47 and E492. This chain is Catecholate siderophore receptor Fiu (fiu), found in Escherichia coli O157:H7.